The sequence spans 382 residues: MVSQKETVCVTGASGFIGSWLVMRLLERGYFVRATVRDPGNLKKVQHLLDLPNAKTLLTLWKADLSEEGSYDDAINGCDGVFHVATPMDFESKDPENEVIKPTVNGMLGIMKACVKAKTVRRFVFTSSAGTVNVEEHQKNVYDENDWSDLEFIMSKKMTGWMYFVSKTLAEKAAWDFAEEKGLDFISIIPTLVVGPFITTSMPPSLITALSPITRNEAHYSIIRQGQYVHLDDLCNAHIFLYEQAAAKGRYICSSHDATILTISKFLRPKYPEYNVPSTFEGVDENLKSIEFSSKKLTDMGFNFKYSLEEMFIESIETCRQKGFLPVSLSYQSISEIKTKNENIDVKTGDGLTDGMKPCNKTETGITGERTDAPMLAQQMCA.

The NADP(+) site is built by K44 and Y163.

Belongs to the NAD(P)-dependent epimerase/dehydratase family. Dihydroflavonol-4-reductase subfamily.

The enzyme catalyses a (2R,3S,4S)-leucoanthocyanidin + NADP(+) = a (2R,3R)-dihydroflavonol + NADPH + H(+). The catalysed reaction is (2S)-flavan-4-ol + NADP(+) = (2S)-flavanone + NADPH + H(+). It participates in pigment biosynthesis; anthocyanin biosynthesis. Functionally, bifunctional enzyme involved in flavonoid metabolism. The sequence is that of Dihydroflavonol 4-reductase (DFRA) from Arabidopsis thaliana (Mouse-ear cress).